A 489-amino-acid polypeptide reads, in one-letter code: UDP-N-acetylmuramate--L-alanine ligase (489 aa).

Residue 128-134 participates in ATP binding; the sequence is GTHGKTT.

The protein belongs to the MurCDEF family.

The protein localises to the cytoplasm. It catalyses the reaction UDP-N-acetyl-alpha-D-muramate + L-alanine + ATP = UDP-N-acetyl-alpha-D-muramoyl-L-alanine + ADP + phosphate + H(+). It functions in the pathway cell wall biogenesis; peptidoglycan biosynthesis. Functionally, cell wall formation. The chain is UDP-N-acetylmuramate--L-alanine ligase from Shewanella sediminis (strain HAW-EB3).